Reading from the N-terminus, the 143-residue chain is FAM161 homolog famh-136 (143 aa).

It belongs to the FAM136 family.

It is found in the cytoplasm. Functionally, may play a role in locomotion and behavior. The protein is FAM161 homolog famh-136 of Caenorhabditis elegans.